Reading from the N-terminus, the 165-residue chain is Neuropeptide W (165 aa).

Residues 1–32 (MAWRPGERGAPASRPRLALLLLLLLLPLPSGA) form the signal peptide. Residues 65–165 (ALRAAAGPLA…GLPCLAPGPF (101 aa)) constitute a propeptide that is removed on maturation. The segment at 106–165 (SQAGIPVRAPRSPRAPEPALEPESLDFSGAGQRLRRDVSRPAVDPAANRLGLPCLAPGPF) is disordered. Residues 113-127 (RAPRSPRAPEPALEP) show a composition bias toward low complexity. Ser-133 is a glycosylation site (O-linked (Xyl...) (chondroitin sulfate) serine).

Belongs to the neuropeptide B/W family. Detected in cerebrospinal fluid and urine (at protein level). Detected at high levels in the substantia nigra, fetal kidney and trachea; at lower levels in testis, uterus, ovary and placenta. Not detectable in many regions of the central nervous system. Also detected at high levels in lymphoblastic leukemia and colorectal adenocarcinoma.

The protein localises to the secreted. In terms of biological role, plays a regulatory role in the organization of neuroendocrine signals accessing the anterior pituitary gland. Stimulates water drinking and food intake. May play a role in the hypothalamic response to stress. NPW23 activates GPR7 and GPR8 more efficiently than NPW30. In Homo sapiens (Human), this protein is Neuropeptide W (NPW).